Here is a 384-residue protein sequence, read N- to C-terminus: N-acetyldiaminopimelate deacetylase (384 aa).

Asp-74 is a catalytic residue. Glu-133 acts as the Proton acceptor in catalysis.

Belongs to the peptidase M20A family. N-acetyldiaminopimelate deacetylase subfamily.

It catalyses the reaction N-acetyl-(2S,6S)-2,6-diaminopimelate + H2O = (2S,6S)-2,6-diaminopimelate + acetate. It functions in the pathway amino-acid biosynthesis; L-lysine biosynthesis via DAP pathway; LL-2,6-diaminopimelate from (S)-tetrahydrodipicolinate (acetylase route): step 3/3. Its function is as follows. Catalyzes the conversion of N-acetyl-diaminopimelate to diaminopimelate and acetate. The protein is N-acetyldiaminopimelate deacetylase of Pediococcus pentosaceus (strain ATCC 25745 / CCUG 21536 / LMG 10740 / 183-1w).